The chain runs to 126 residues: Glycine cleavage system H protein (126 aa).

The region spanning Val-22 to Glu-104 is the Lipoyl-binding domain. Lys-63 is modified (N6-lipoyllysine).

This sequence belongs to the GcvH family. As to quaternary structure, the glycine cleavage system is composed of four proteins: P, T, L and H. Requires (R)-lipoate as cofactor.

In terms of biological role, the glycine cleavage system catalyzes the degradation of glycine. The H protein shuttles the methylamine group of glycine from the P protein to the T protein. Is also involved in protein lipoylation via its role as an octanoyl/lipoyl carrier protein intermediate. The sequence is that of Glycine cleavage system H protein from Staphylococcus epidermidis (strain ATCC 12228 / FDA PCI 1200).